A 160-amino-acid chain; its full sequence is Transcriptional repressor NrdR (160 aa).

A zinc finger lies at 3–34 (CPYCQYEDTQVKDSRPVEEGAVIRRRRVCPVC). In terms of domain architecture, ATP-cone spans 49–139 (LLVSKKSGRC…VYRDFRNASD (91 aa)).

The protein belongs to the NrdR family. Requires Zn(2+) as cofactor.

Its function is as follows. Negatively regulates transcription of bacterial ribonucleotide reductase nrd genes and operons by binding to NrdR-boxes. This is Transcriptional repressor NrdR from Bartonella quintana (strain Toulouse) (Rochalimaea quintana).